The primary structure comprises 113 residues: Nucleoid-associated protein PMT_0025 (113 aa).

This sequence belongs to the YbaB/EbfC family. As to quaternary structure, homodimer.

Its subcellular location is the cytoplasm. It is found in the nucleoid. Its function is as follows. Binds to DNA and alters its conformation. May be involved in regulation of gene expression, nucleoid organization and DNA protection. The chain is Nucleoid-associated protein PMT_0025 from Prochlorococcus marinus (strain MIT 9313).